A 363-amino-acid chain; its full sequence is UDP-N-acetylglucosamine--N-acetylmuramyl-(pentapeptide) pyrophosphoryl-undecaprenol N-acetylglucosamine transferase (363 aa).

Residues 16–18, Asn128, Arg167, Ser195, Ile249, 268–273, and Gln294 each bind UDP-N-acetyl-alpha-D-glucosamine; these read TGG and ALTVSE.

The protein belongs to the glycosyltransferase 28 family. MurG subfamily.

The protein localises to the cell inner membrane. The catalysed reaction is di-trans,octa-cis-undecaprenyl diphospho-N-acetyl-alpha-D-muramoyl-L-alanyl-D-glutamyl-meso-2,6-diaminopimeloyl-D-alanyl-D-alanine + UDP-N-acetyl-alpha-D-glucosamine = di-trans,octa-cis-undecaprenyl diphospho-[N-acetyl-alpha-D-glucosaminyl-(1-&gt;4)]-N-acetyl-alpha-D-muramoyl-L-alanyl-D-glutamyl-meso-2,6-diaminopimeloyl-D-alanyl-D-alanine + UDP + H(+). It functions in the pathway cell wall biogenesis; peptidoglycan biosynthesis. Cell wall formation. Catalyzes the transfer of a GlcNAc subunit on undecaprenyl-pyrophosphoryl-MurNAc-pentapeptide (lipid intermediate I) to form undecaprenyl-pyrophosphoryl-MurNAc-(pentapeptide)GlcNAc (lipid intermediate II). The sequence is that of UDP-N-acetylglucosamine--N-acetylmuramyl-(pentapeptide) pyrophosphoryl-undecaprenol N-acetylglucosamine transferase from Marinobacter nauticus (strain ATCC 700491 / DSM 11845 / VT8) (Marinobacter aquaeolei).